Reading from the N-terminus, the 172-residue chain is Crossover junction endodeoxyribonuclease RuvC (172 aa).

Catalysis depends on residues Asp7, Glu68, and Asp140. 3 residues coordinate Mg(2+): Asp7, Glu68, and Asp140.

This sequence belongs to the RuvC family. In terms of assembly, homodimer which binds Holliday junction (HJ) DNA. The HJ becomes 2-fold symmetrical on binding to RuvC with unstacked arms; it has a different conformation from HJ DNA in complex with RuvA. In the full resolvosome a probable DNA-RuvA(4)-RuvB(12)-RuvC(2) complex forms which resolves the HJ. It depends on Mg(2+) as a cofactor.

It localises to the cytoplasm. It catalyses the reaction Endonucleolytic cleavage at a junction such as a reciprocal single-stranded crossover between two homologous DNA duplexes (Holliday junction).. The RuvA-RuvB-RuvC complex processes Holliday junction (HJ) DNA during genetic recombination and DNA repair. Endonuclease that resolves HJ intermediates. Cleaves cruciform DNA by making single-stranded nicks across the HJ at symmetrical positions within the homologous arms, yielding a 5'-phosphate and a 3'-hydroxyl group; requires a central core of homology in the junction. The consensus cleavage sequence is 5'-(A/T)TT(C/G)-3'. Cleavage occurs on the 3'-side of the TT dinucleotide at the point of strand exchange. HJ branch migration catalyzed by RuvA-RuvB allows RuvC to scan DNA until it finds its consensus sequence, where it cleaves and resolves the cruciform DNA. This Polynucleobacter asymbioticus (strain DSM 18221 / CIP 109841 / QLW-P1DMWA-1) (Polynucleobacter necessarius subsp. asymbioticus) protein is Crossover junction endodeoxyribonuclease RuvC.